Reading from the N-terminus, the 186-residue chain is Pyridoxal 5'-phosphate synthase subunit PdxT (186 aa).

47–49 is an L-glutamine binding site; that stretch reads GES. The active-site Nucleophile is Cys79. L-glutamine-binding positions include Arg106 and 134–135; that span reads IR. Residues His170 and Glu172 each act as charge relay system in the active site.

The protein belongs to the glutaminase PdxT/SNO family. In terms of assembly, in the presence of PdxS, forms a dodecamer of heterodimers. Only shows activity in the heterodimer.

The enzyme catalyses aldehydo-D-ribose 5-phosphate + D-glyceraldehyde 3-phosphate + L-glutamine = pyridoxal 5'-phosphate + L-glutamate + phosphate + 3 H2O + H(+). It catalyses the reaction L-glutamine + H2O = L-glutamate + NH4(+). The protein operates within cofactor biosynthesis; pyridoxal 5'-phosphate biosynthesis. Functionally, catalyzes the hydrolysis of glutamine to glutamate and ammonia as part of the biosynthesis of pyridoxal 5'-phosphate. The resulting ammonia molecule is channeled to the active site of PdxS. This Methanothrix thermoacetophila (strain DSM 6194 / JCM 14653 / NBRC 101360 / PT) (Methanosaeta thermophila) protein is Pyridoxal 5'-phosphate synthase subunit PdxT.